The chain runs to 365 residues: Heme A synthase (365 aa).

Transmembrane regions (helical) follow at residues 17–37 (AVRIWLTVVAALIAVMVLVGG), 107–127 (VIGIAYLLPFLWFLWRGAIGP), 132–152 (ALWGIFALGALQGAVGWWMVA), 164–184 (VRLAVHLTLALIIYAAIVWTL), 203–223 (AIALLALTLLQLFLGALVAGL), 264–283 (QFDHRMMAYALWALAAWHAI), 296–316 (GALWLFAALSLQAVLGILTVL), and 320–340 (PIGLALAHQAVGIVVLTLAVL). His267 contributes to the heme binding site. Residue His327 coordinates heme.

Belongs to the COX15/CtaA family. Type 2 subfamily. In terms of assembly, interacts with CtaB. Heme b is required as a cofactor.

It localises to the cell membrane. The catalysed reaction is Fe(II)-heme o + 2 A + H2O = Fe(II)-heme a + 2 AH2. The protein operates within porphyrin-containing compound metabolism; heme A biosynthesis; heme A from heme O: step 1/1. Functionally, catalyzes the conversion of heme O to heme A by two successive hydroxylations of the methyl group at C8. The first hydroxylation forms heme I, the second hydroxylation results in an unstable dihydroxymethyl group, which spontaneously dehydrates, resulting in the formyl group of heme A. In Rhodopseudomonas palustris (strain HaA2), this protein is Heme A synthase.